A 68-amino-acid chain; its full sequence is Large ribosomal subunit protein uL30 (68 aa).

This sequence belongs to the universal ribosomal protein uL30 family. As to quaternary structure, part of the 50S ribosomal subunit.

The chain is Large ribosomal subunit protein uL30 from Paenarthrobacter aurescens (strain TC1).